The primary structure comprises 50 residues: Basic phospholipase A2 Bmaj-9 (50 aa).

Ca(2+) contacts are provided by Y27, G29, and G31. A disulfide bridge connects residues C28 and C45. The active site involves H48. D49 provides a ligand contact to Ca(2+).

This sequence belongs to the phospholipase A2 family. Group II subfamily. D49 sub-subfamily. Requires Ca(2+) as cofactor. Expressed by the venom gland.

It is found in the secreted. The enzyme catalyses a 1,2-diacyl-sn-glycero-3-phosphocholine + H2O = a 1-acyl-sn-glycero-3-phosphocholine + a fatty acid + H(+). In terms of biological role, snake venom phospholipase A2 (PLA2) that causes irreversible neuromuscular blockade in chick biventer cervicis muscle preparations. The neuromuscular blockade is mediated by inhibitory action at the presynaptic motor nerve endings. PLA2 catalyzes the calcium-dependent hydrolysis of the 2-acyl groups in 3-sn-phosphoglycerides. The sequence is that of Basic phospholipase A2 Bmaj-9 from Bothrops marajoensis (Marajo lancehead).